A 401-amino-acid polypeptide reads, in one-letter code: Proline-rich protein 30 (401 aa).

Over residues P69 to D80 the composition is skewed to polar residues. 3 disordered regions span residues P69–S93, S129–G191, and Q357–S401. Composition is skewed to low complexity over residues P83–S93 and S129–S147. Composition is skewed to polar residues over residues R148–S186 and Q357–L368.

This chain is Proline-rich protein 30 (Prr30), found in Mus musculus (Mouse).